Reading from the N-terminus, the 186-residue chain is ADP-ribosylation factor-like protein 8B-A (186 aa).

The segment at residues 1-19 is an intramembrane region (note=Mediates targeting to membranes); it reads MLALINRLLDWFKSLFWKE. GTP contacts are provided by residues 29 to 35, 71 to 75, and 130 to 133; these read QYSGKTT, DIGGQ, and NKRD.

This sequence belongs to the small GTPase superfamily. Arf family.

The protein resides in the late endosome membrane. It localises to the lysosome membrane. The protein localises to the cytoplasm. It is found in the cytoskeleton. Its subcellular location is the spindle. The protein resides in the early endosome membrane. Its function is as follows. Small GTPase which cycles between active GTP-bound and inactive GDP-bound states. In its active state, binds to a variety of effector proteins playing a key role in the regulation of lysosomal positioning which is important for nutrient sensing, natural killer cell-mediated cytotoxicity and antigen presentation. Along with its effectors, orchestrates lysosomal transport and fusion. The polypeptide is ADP-ribosylation factor-like protein 8B-A (arl8ba) (Danio rerio (Zebrafish)).